Here is a 537-residue protein sequence, read N- to C-terminus: Chaperonin GroEL 1 (537 aa).

Residues 29 to 32 (TLGP), 86 to 90 (DGTTT), glycine 413, and aspartate 494 each bind ATP.

The protein belongs to the chaperonin (HSP60) family. As to quaternary structure, forms a cylinder of 14 subunits composed of two heptameric rings stacked back-to-back. Interacts with the co-chaperonin GroES.

It localises to the cytoplasm. It carries out the reaction ATP + H2O + a folded polypeptide = ADP + phosphate + an unfolded polypeptide.. Functionally, together with its co-chaperonin GroES, plays an essential role in assisting protein folding. The GroEL-GroES system forms a nano-cage that allows encapsulation of the non-native substrate proteins and provides a physical environment optimized to promote and accelerate protein folding. This is Chaperonin GroEL 1 from Mycobacterium leprae (strain TN).